The sequence spans 345 residues: MNTSQQQQQQQQQQQQQQQQQQQTPQQVENVSAFPPPPPFYKLYLNYKKDVDYSKPTTENSKKNDTPEGNESTIEKNIDNSDEMNIDNNNNNNNNNNNNNNNNNNNNNNNNNNNNNNNNNNNNNNNKATTSTNKKIELNKPLAPPLPPKVGANYVQFGQTYSTVDMLPSLDESGAKQLYPKGDIEPISELKKLNRSILFNYLQLLETLIENPKNYQSKIEDISLLFINFHHLLNSYRPHQARETLLSIMNEQIKQKNQSNESIKKALDICKESLMNSFKNLNIEDKQIDSATPLPTNITSPTKNLMSPTKLNNSQDVNMNENNDDDEDKEINWMDQLLDEMLKIN.

2 stretches are compositionally biased toward low complexity: residues 1 to 27 (MNTS…TPQQ) and 88 to 126 (NNNN…NNNN). Disordered stretches follow at residues 1 to 130 (MNTS…KATT) and 292 to 315 (TPLP…NNSQ).

Belongs to the Mediator complex subunit 7 family. Component of the Mediator complex.

It is found in the nucleus. Its function is as follows. Component of the Mediator complex, a coactivator involved in the regulated transcription of nearly all RNA polymerase II-dependent genes. Mediator functions as a bridge to convey information from gene-specific regulatory proteins to the basal RNA polymerase II transcription machinery. Mediator is recruited to promoters by direct interactions with regulatory proteins and serves as a scaffold for the assembly of a functional preinitiation complex with RNA polymerase II and the general transcription factors. The sequence is that of Putative mediator of RNA polymerase II transcription subunit 7 (med7) from Dictyostelium discoideum (Social amoeba).